Here is a 306-residue protein sequence, read N- to C-terminus: NAD-dependent protein deacylase (306 aa).

The region spanning 1 to 305 (MNKQLKEFQE…PIALKPLIGD (305 aa)) is the Deacetylase sirtuin-type domain. An NAD(+)-binding site is contributed by 23–42 (GAGLSASSGLPTFRGSQGLW). Positions 67 and 70 each coordinate substrate. NAD(+) is bound at residue 103-106 (QNVD). Catalysis depends on His-123, which acts as the Proton acceptor. Positions 131, 136, 200, and 203 each coordinate Zn(2+). NAD(+) is bound by residues 243 to 245 (GTS), 269 to 271 (NTD), and Ala-291.

The protein belongs to the sirtuin family. Class III subfamily. Requires Zn(2+) as cofactor.

The protein localises to the mitochondrion. It carries out the reaction N(6)-malonyl-L-lysyl-[protein] + NAD(+) + H2O = 2''-O-malonyl-ADP-D-ribose + nicotinamide + L-lysyl-[protein]. It catalyses the reaction N(6)-succinyl-L-lysyl-[protein] + NAD(+) + H2O = 2''-O-succinyl-ADP-D-ribose + nicotinamide + L-lysyl-[protein]. The enzyme catalyses N(6)-glutaryl-L-lysyl-[protein] + NAD(+) + H2O = 2''-O-glutaryl-ADP-D-ribose + nicotinamide + L-lysyl-[protein]. NAD-dependent lysine demalonylase, desuccinylase and deglutarylase that specifically removes malonyl, succinyl and glutaryl groups on target proteins. Has weak NAD-dependent protein deacetylase activity; however this activity may not be physiologically relevant in vivo. The polypeptide is NAD-dependent protein deacylase (Candida albicans (strain SC5314 / ATCC MYA-2876) (Yeast)).